The following is a 494-amino-acid chain: UPF0371 protein SEQ_1471 (494 aa).

Belongs to the UPF0371 family.

The chain is UPF0371 protein SEQ_1471 from Streptococcus equi subsp. equi (strain 4047).